The sequence spans 587 residues: Inorganic phosphate transporter PHO84 (587 aa).

Over 1–67 (MSSVNKDTIH…FGWQQVKTIS (67 aa)) the chain is Extracellular. K6 is covalently cross-linked (Glycyl lysine isopeptide (Lys-Gly) (interchain with G-Cter in ubiquitin)). Residues 68 to 88 (IAGVGFLTDSYDIFAINLGIT) traverse the membrane as a helical segment. Over 89 to 108 (MMSYVYWHGSMPGPSQTLLK) the chain is Cytoplasmic. A helical transmembrane segment spans residues 109 to 129 (VSTSVGTVIGQFGFGTLADIV). Residues 130-133 (GRKR) lie on the Extracellular side of the membrane. A helical transmembrane segment spans residues 134 to 154 (IYGMELIIMIVCTILQTTVAH). Residues 155–156 (SP) lie on the Cytoplasmic side of the membrane. The helical transmembrane segment at 157–177 (AINFVAVLTFYRIVMGIGIGG) threads the bilayer. Over 178-201 (DYPLSSIITSEFATTKWRGAIMGA) the chain is Extracellular. A helical transmembrane segment spans residues 202-222 (VFANQAWGQISGGIIALILVA). Residues 223–250 (AYKGELEYANSGAECDARCQKACDQMWR) are Cytoplasmic-facing. A helical transmembrane segment spans residues 251–271 (ILIGLGTVLGLACLYFRLTIP). Residues 272 to 345 (ESPRYQLDVN…RHFGQWKYGK (74 aa)) are Extracellular-facing. K298 participates in a covalent cross-link: Glycyl lysine isopeptide (Lys-Gly) (interchain with G-Cter in ubiquitin). T302 carries the phosphothreonine modification. Residues S303 and S316 each carry the phosphoserine modification. The residue at position 317 (T317) is a Phosphothreonine. A Phosphoserine modification is found at S321. A helical membrane pass occupies residues 346–366 (ILLGTAGSWFTLDVAFYGLSL). Over 367–395 (NSAVILQTIGYAGSKNVYKKLYDTAVGNL) the chain is Cytoplasmic. Residues 396–416 (ILICAGSLPGYWVSVFTVDII) traverse the membrane as a helical segment. Residues 417–419 (GRK) lie on the Extracellular side of the membrane. The chain crosses the membrane as a helical span at residues 420 to 440 (PIQLAGFIILTALFCVIGFAY). At 441 to 442 (HK) the chain is on the cytoplasmic side. The helical transmembrane segment at 443–463 (LGDHGLLALYVICQFFQNFGP) threads the bilayer. The Extracellular segment spans residues 464–485 (NTTTFIVPGECFPTRYRSTAHG). Residues 486–506 (ISAASGKVGAIIAQTALGTLI) form a helical membrane-spanning segment. Topologically, residues 507–522 (DHNCARDGKPTNCWLP) are cytoplasmic. The helical transmembrane segment at 523–543 (HVMEIFALFMLLGIFTTLLIP) threads the bilayer. At 544–587 (ETKRKTLEEINELYHDEIDPATLNFRNKNNDIESSSPSQLQHEA) the chain is on the extracellular side. Positions 568–587 (FRNKNNDIESSSPSQLQHEA) are disordered. S577, S579, and S581 each carry phosphoserine.

This sequence belongs to the major facilitator superfamily. Phosphate:H(+) symporter (TC 2.A.1.9) family. As to quaternary structure, may function as a monomer. Post-translationally, phosphorylated; phosphorylation increases after phosphate addition to the growth medium. In terms of processing, ubiquitinated in a phosphate-dependent manner; ubiquitination may influence the trafficking of PHO84 to the cell membrane and serve as a signal for endocytosis and internalization.

The protein localises to the cell membrane. It localises to the vacuole. The catalysed reaction is phosphate(in) + H(+)(in) = phosphate(out) + H(+)(out). The enzyme catalyses Mn(2+)(in) = Mn(2+)(out). It carries out the reaction Zn(2+)(in) = Zn(2+)(out). It catalyses the reaction Cu(2+)(in) = Cu(2+)(out). The catalysed reaction is Co(2+)(in) = Co(2+)(out). Transport activity is inhibited in the presence of the protonophore carbonylcyanide m-chlorophenylhydrazone. Transport activity is inhibited by glycerol-3-phosphate. Transport activity is inhibited by phosphonoacetic acid. Signaling activity is stimulated by glycerol-3-phosphate which acts as a nontransported PHO84 agonist that can trigger PKA signaling. Signaling activity is stimulated by arsenate. Its function is as follows. Proton-coupled high-affinity transporter for external inorganic phosphate. Acts as a transceptor, a membrane protein that in addition to its transporter activity also possesses receptor-like signaling activity; mediates activation of the protein kinase A (PKA) pathway targets during growth induction, triggered by phosphate addition to cells growth-arrested due to previous phosphate starvation. Is not an essential protein, since constitutive, low affinity phosphate transporters exist in yeast. Can function as a low affinity metal transporter that transports manganese, zinc, cobalt and copper. Plays a role in manganese homeostasis predominantly under manganese surplus conditions. The sequence is that of Inorganic phosphate transporter PHO84 (PHO84) from Saccharomyces cerevisiae (strain ATCC 204508 / S288c) (Baker's yeast).